A 500-amino-acid chain; its full sequence is L-arabinose isomerase (500 aa).

Residues Glu-306, Glu-333, His-350, and His-450 each contribute to the Mn(2+) site.

The protein belongs to the arabinose isomerase family. Homohexamer. Requires Mn(2+) as cofactor.

It carries out the reaction beta-L-arabinopyranose = L-ribulose. The protein operates within carbohydrate degradation; L-arabinose degradation via L-ribulose; D-xylulose 5-phosphate from L-arabinose (bacterial route): step 1/3. Functionally, catalyzes the conversion of L-arabinose to L-ribulose. The protein is L-arabinose isomerase of Klebsiella pneumoniae (strain 342).